The sequence spans 434 residues: Tol-Pal system protein TolB (434 aa).

An N-terminal signal peptide occupies residues 1-21 (MIVRRALALAALALAASPALA). The tract at residues 411 to 434 (GDRQTPVTSGKTDLAAPAWGPLAP) is disordered.

Belongs to the TolB family. The Tol-Pal system is composed of five core proteins: the inner membrane proteins TolA, TolQ and TolR, the periplasmic protein TolB and the outer membrane protein Pal. They form a network linking the inner and outer membranes and the peptidoglycan layer.

The protein resides in the periplasm. In terms of biological role, part of the Tol-Pal system, which plays a role in outer membrane invagination during cell division and is important for maintaining outer membrane integrity. The protein is Tol-Pal system protein TolB of Anaeromyxobacter dehalogenans (strain 2CP-C).